Consider the following 577-residue polypeptide: Pentatricopeptide repeat-containing protein At2g01390 (577 aa).

PPR repeat units lie at residues 121-155, 156-190, 191-225, 226-260, 261-295, 382-416, 417-451, 452-482, 485-519, and 520-554; these read DHFT…GVLI, DTVT…GCEP, TVVS…RVSP, NCHT…GVQP, DKAA…GVVL, DSFV…GIHL, KKSA…QHSL, GCYQ…LPDD, GVAA…EIMP, and SLGT…LVAS.

It belongs to the PPR family. P subfamily.

This chain is Pentatricopeptide repeat-containing protein At2g01390, found in Arabidopsis thaliana (Mouse-ear cress).